We begin with the raw amino-acid sequence, 307 residues long: Ribosomal RNA small subunit methyltransferase H (307 aa).

S-adenosyl-L-methionine contacts are provided by residues 32–34 (AGH), aspartate 51, isoleucine 82, aspartate 99, and glutamine 106.

Belongs to the methyltransferase superfamily. RsmH family.

The protein localises to the cytoplasm. It catalyses the reaction cytidine(1402) in 16S rRNA + S-adenosyl-L-methionine = N(4)-methylcytidine(1402) in 16S rRNA + S-adenosyl-L-homocysteine + H(+). In terms of biological role, specifically methylates the N4 position of cytidine in position 1402 (C1402) of 16S rRNA. The chain is Ribosomal RNA small subunit methyltransferase H from Campylobacter concisus (strain 13826).